Reading from the N-terminus, the 95-residue chain is RING finger protein Z (95 aa).

The N-myristoyl glycine; by host moiety is linked to residue Gly-2. Residues 38–74 form an RING-type; atypical zinc finger; the sequence is CKSCWFANKGLLKCSNHYLCLKCLTLMLRRSDYCGIC. The short motif at 88–91 is the PTAP/PSAP motif element; the sequence is PSAP.

This sequence belongs to the arenaviridae Z protein family. In terms of assembly, interacts with protein NP; this interaction probably directs the encapsidated genome to budding sites. Interacts (via RING domain) with polymerase L; this interaction inhibits viral transcription and replication, Z partially blocks the product exit tunnel for the releasing nascent RNA product. Interacts with the glycoprotein complex; this interaction plays a role in virion budding. Interacts with host eIF4E; this interaction results in eIF4E reduced affinity for its substrate, the 5'-m7 G cap structure. Interacts (via late-budding domain) with host TSG101; this interaction is essential for budding and release of viral particles. Interacts with host RPLP0; this interaction may serve to load ribosome-like particles inside the virion. Interacts with host PML; this interaction induces PML bodies redistribution in the cytoplasm upon viral infection. In terms of processing, myristoylation is required for the role of RING finger protein Z in assembly and budding.

It is found in the virion. The protein resides in the host cytoplasm. Its subcellular location is the host perinuclear region. It localises to the host cell membrane. Its function is as follows. Plays a crucial role in virion assembly and budding. Expressed late in the virus life cycle, it acts as an inhibitor of viral transcription and RNA synthesis by interacting with the viral polymerase L. Presumably recruits the NP encapsidated genome to cellular membranes at budding sites via direct interaction with NP. Plays critical roles in the final steps of viral release by interacting with host TSG101, a member of the vacuolar protein-sorting pathway and using other cellular host proteins involved in vesicle formation pathway. The budding of the virus progeny occurs after association of protein Z with the viral glycoprotein complex SSP-GP1-GP2 at the cell periphery, step that requires myristoylation of protein Z. Also selectively represses protein production by associating with host eIF4E. In cell-based minigenome assay, has an inhibitory effect on the ribonucleoprotein machinery (vRNP), which is responsible for the replication and transcription of the viral genome. The chain is RING finger protein Z from Neotoma (wood rats).